A 377-amino-acid polypeptide reads, in one-letter code: Benzylmalonyl-CoA dehydrogenase (377 aa).

FAD is bound by residues 123–132 (ICMTEPNAGS), 156–158 (WIT), R266, Q277, and 363–365 (TSE).

Belongs to the acyl-CoA dehydrogenase family. Homotetramer. Requires FAD as cofactor.

The catalysed reaction is (2-aminobenzyl)malonyl-CoA + O2 + H(+) = (E)-2-aminocinnamoyl-CoA + H2O2 + CO2. The enzyme catalyses benzylmalonyl-CoA + O2 + H(+) = (E)-cinnamoyl-CoA + H2O2 + CO2. Functionally, involved in degradation of indoleacetate, the most common member of the auxin class of plant hormones. Catalyzes the irreversible oxidative decarboxylation of (2-aminobenzyl)malonyl-CoA to 2-aminocinnamoyl-CoA and CO(2). In vitro, shows high catalytic efficiency with benzylmalonyl-CoA, a chemical analog of the physiological substrate, but otherwise accepts only a few medium-chain alkylmalonyl-CoA compounds as alternative substrates with low activities. The polypeptide is Benzylmalonyl-CoA dehydrogenase (Aromatoleum aromaticum (strain DSM 19018 / LMG 30748 / EbN1) (Azoarcus sp. (strain EbN1))).